The following is a 494-amino-acid chain: Cytochrome P450 2G1 (494 aa).

Cys439 provides a ligand contact to heme.

It belongs to the cytochrome P450 family. The cofactor is heme. As to expression, olfactory epithelium.

Its subcellular location is the endoplasmic reticulum membrane. The protein resides in the microsome membrane. The catalysed reaction is an organic molecule + reduced [NADPH--hemoprotein reductase] + O2 = an alcohol + oxidized [NADPH--hemoprotein reductase] + H2O + H(+). Its function is as follows. Cytochromes P450 are a group of heme-thiolate monooxygenases. This isozyme seems to be implicated in olfaction. This is Cytochrome P450 2G1 (Cyp2g1) from Rattus norvegicus (Rat).